A 237-amino-acid chain; its full sequence is Small ribosomal subunit protein eS4 (237 aa).

The S4 RNA-binding domain occupies 37–99; it reads VPLLIVLRDV…REEYYRIFPD (63 aa).

This sequence belongs to the eukaryotic ribosomal protein eS4 family.

The polypeptide is Small ribosomal subunit protein eS4 (Natronomonas pharaonis (strain ATCC 35678 / DSM 2160 / CIP 103997 / JCM 8858 / NBRC 14720 / NCIMB 2260 / Gabara) (Halobacterium pharaonis)).